We begin with the raw amino-acid sequence, 239 residues long: 7-cyano-7-deazaguanine synthase (239 aa).

ATP is bound at residue Leu-8–Leu-18. The Zn(2+) site is built by Cys-188, Cys-196, Cys-199, and Cys-202.

This sequence belongs to the QueC family. Zn(2+) is required as a cofactor.

It carries out the reaction 7-carboxy-7-deazaguanine + NH4(+) + ATP = 7-cyano-7-deazaguanine + ADP + phosphate + H2O + H(+). Its pathway is purine metabolism; 7-cyano-7-deazaguanine biosynthesis. Functionally, catalyzes the ATP-dependent conversion of 7-carboxy-7-deazaguanine (CDG) to 7-cyano-7-deazaguanine (preQ(0)). The protein is 7-cyano-7-deazaguanine synthase of Picrophilus torridus (strain ATCC 700027 / DSM 9790 / JCM 10055 / NBRC 100828 / KAW 2/3).